Reading from the N-terminus, the 202-residue chain is Ras-related protein RIC1 (202 aa).

Residues 15–23, 33–40, 63–67, 121–124, and 151–153 each bind GTP; these read GDSGVGKSC, YLESYIST, DTAGQ, NKCD, and SAK. The short motif at 37–45 is the Effector region element; that stretch reads YISTIGVDF. Over residues 174 to 185 the composition is skewed to polar residues; the sequence is ASQPATNASKPA. The disordered stretch occupies residues 174–202; that stretch reads ASQPATNASKPATVQMRGQPVAQQSSCCS. S-geranylgeranyl cysteine attachment occurs at residues C200 and C201.

Belongs to the small GTPase superfamily. Rab family.

The protein resides in the cell membrane. Possesses GTPase activity. The polypeptide is Ras-related protein RIC1 (RIC1) (Oryza sativa subsp. japonica (Rice)).